A 652-amino-acid chain; its full sequence is DNA ligase (652 aa).

NAD(+)-binding positions include 30-34 (DEVYD), 79-80 (SL), and glutamate 108. The active-site N6-AMP-lysine intermediate is the lysine 110. Residues arginine 131, glutamate 165, lysine 280, and lysine 304 each contribute to the NAD(+) site. Zn(2+) is bound by residues cysteine 398, cysteine 401, cysteine 414, and cysteine 419. Residues 574-652 (AKENPFKGKS…DEMRSKIEQA (79 aa)) form the BRCT domain.

Belongs to the NAD-dependent DNA ligase family. LigA subfamily. Requires Mg(2+) as cofactor. The cofactor is Mn(2+).

It carries out the reaction NAD(+) + (deoxyribonucleotide)n-3'-hydroxyl + 5'-phospho-(deoxyribonucleotide)m = (deoxyribonucleotide)n+m + AMP + beta-nicotinamide D-nucleotide.. Functionally, DNA ligase that catalyzes the formation of phosphodiester linkages between 5'-phosphoryl and 3'-hydroxyl groups in double-stranded DNA using NAD as a coenzyme and as the energy source for the reaction. It is essential for DNA replication and repair of damaged DNA. This Sulfurimonas denitrificans (strain ATCC 33889 / DSM 1251) (Thiomicrospira denitrificans (strain ATCC 33889 / DSM 1251)) protein is DNA ligase.